The primary structure comprises 453 residues: MLPIIVLIGRTNVGKSTLFNILSKTRNALVADYPGLTRDRNYGYCYLKENKKITIVDTAGINFKSQKIEKQSHEQTLKAIKECDGILFLVNARDGVMPEEYEISRKIRKYEKKTILVINKIDGIKEISKINEFYSLGFKENIKISASHNQGINNLISKYLTPWINSKFKEKKLEKISQEHSKKEKNSVKIACIGKPNVGKSTLINSLLMKKRMITSNKAGTTLDTVLVPIKYNYKNYIFIDTAGMSKKKSKTNKIEKFCKIKTLQTIEKSHLTLLIIDAKDQISKQDLLLSSFIEKSGKPLIIVINKCDLLSLKEKKNLENLIKKQLKCNFFSKIHFISALNNEGTVELFKSIDTSYHTSQKKIKTSQVMKIMHKAVKKHQPPIINGRRIKLKYAHLGNSNPIEIMIHGNQVKNLSLCYKKYLKNFFYKTLKMNGTPIKIQFKETMNPYISKK.

EngA-type G domains are found at residues 3 to 167 (PIIV…INSK) and 188 to 361 (VKIA…HTSQ). GTP contacts are provided by residues 9–16 (GRTNVGKS), 57–61 (DTAGI), 119–122 (NKID), 194–201 (GKPNVGKS), 241–245 (DTAGM), and 306–309 (NKCD). One can recognise a KH-like domain in the interval 362–446 (KKIKTSQVMK…PIKIQFKETM (85 aa)).

This sequence belongs to the TRAFAC class TrmE-Era-EngA-EngB-Septin-like GTPase superfamily. EngA (Der) GTPase family. In terms of assembly, associates with the 50S ribosomal subunit.

GTPase that plays an essential role in the late steps of ribosome biogenesis. The polypeptide is GTPase Der (Buchnera aphidicola subsp. Schizaphis graminum (strain Sg)).